Here is a 191-residue protein sequence, read N- to C-terminus: Small ribosomal subunit protein uS9c (191 aa).

The tract at residues 166 to 191 (TQDSRVKERRKYGLKKARKASQYHKR) is disordered. Residues 172-191 (KERRKYGLKKARKASQYHKR) are compositionally biased toward basic residues.

The protein belongs to the universal ribosomal protein uS9 family.

Its subcellular location is the plastid. It is found in the chloroplast. In Chlamydomonas reinhardtii (Chlamydomonas smithii), this protein is Small ribosomal subunit protein uS9c (rps9).